A 206-amino-acid chain; its full sequence is FMN-dependent NADH:quinone oxidoreductase 1 (206 aa).

FMN-binding positions include Ser10 and Ser16 to Ser18.

It belongs to the azoreductase type 1 family. In terms of assembly, homodimer. It depends on FMN as a cofactor.

It catalyses the reaction 2 a quinone + NADH + H(+) = 2 a 1,4-benzosemiquinone + NAD(+). The catalysed reaction is N,N-dimethyl-1,4-phenylenediamine + anthranilate + 2 NAD(+) = 2-(4-dimethylaminophenyl)diazenylbenzoate + 2 NADH + 2 H(+). Functionally, quinone reductase that provides resistance to thiol-specific stress caused by electrophilic quinones. In terms of biological role, also exhibits azoreductase activity. Catalyzes the reductive cleavage of the azo bond in aromatic azo compounds to the corresponding amines. The chain is FMN-dependent NADH:quinone oxidoreductase 1 from Burkholderia lata (strain ATCC 17760 / DSM 23089 / LMG 22485 / NCIMB 9086 / R18194 / 383).